Consider the following 423-residue polypeptide: Histidine--tRNA ligase 2 (423 aa).

The protein belongs to the class-II aminoacyl-tRNA synthetase family. In terms of assembly, homodimer.

The protein resides in the cytoplasm. It carries out the reaction tRNA(His) + L-histidine + ATP = L-histidyl-tRNA(His) + AMP + diphosphate + H(+). The sequence is that of Histidine--tRNA ligase 2 from Bacillus cereus (strain ATCC 10987 / NRS 248).